The chain runs to 443 residues: Serine/threonine-protein phosphatase 2A 55 kDa regulatory subunit B beta isoform (443 aa).

WD repeat units follow at residues Thr-22–Pro-61, Glu-87–Glu-128, Ala-171–Asn-209, Glu-220–Asn-260, Glu-279–Glu-317, Glu-334–Leu-375, and Asp-410–Asn-443.

This sequence belongs to the phosphatase 2A regulatory subunit B family. PP2A consists of a common heterodimeric core enzyme, composed of a 36 kDa catalytic subunit (subunit C) and a 65 kDa constant regulatory subunit (PR65 or subunit A), that associates with a variety of regulatory subunits.

It is found in the cytoplasm. The protein resides in the cytoskeleton. It localises to the membrane. In terms of biological role, the B regulatory subunit might modulate substrate selectivity and catalytic activity, and might also direct the localization of the catalytic enzyme to a particular subcellular compartment. The polypeptide is Serine/threonine-protein phosphatase 2A 55 kDa regulatory subunit B beta isoform (ppp2r2b) (Carassius auratus (Goldfish)).